Consider the following 432-residue polypeptide: D-amino acid dehydrogenase (432 aa).

3–17 (VVILGSGVVGVTSAW) is an FAD binding site.

It belongs to the DadA oxidoreductase family. It depends on FAD as a cofactor.

The enzyme catalyses a D-alpha-amino acid + A + H2O = a 2-oxocarboxylate + AH2 + NH4(+). Its pathway is amino-acid degradation; D-alanine degradation; NH(3) and pyruvate from D-alanine: step 1/1. In terms of biological role, oxidative deamination of D-amino acids. In Salmonella dublin (strain CT_02021853), this protein is D-amino acid dehydrogenase.